The following is an 89-amino-acid chain: MSITQERKSALIAEHARGKTDTGSPEVQVAILTTRIANLTEHFKTHKKDNHSRRGLLKMVSQRRRLLDYVKNKDVARYQAIIEKLGLRR.

The span at Met-1–Thr-20 shows a compositional bias: basic and acidic residues. Residues Met-1–Ser-24 form a disordered region.

Belongs to the universal ribosomal protein uS15 family. Part of the 30S ribosomal subunit. Forms a bridge to the 50S subunit in the 70S ribosome, contacting the 23S rRNA.

Functionally, one of the primary rRNA binding proteins, it binds directly to 16S rRNA where it helps nucleate assembly of the platform of the 30S subunit by binding and bridging several RNA helices of the 16S rRNA. Forms an intersubunit bridge (bridge B4) with the 23S rRNA of the 50S subunit in the ribosome. This is Small ribosomal subunit protein uS15 from Maricaulis maris (strain MCS10) (Caulobacter maris).